The sequence spans 141 residues: Large ribosomal subunit protein uL11 (141 aa).

Belongs to the universal ribosomal protein uL11 family. Part of the ribosomal stalk of the 50S ribosomal subunit. Interacts with L10 and the large rRNA to form the base of the stalk. L10 forms an elongated spine to which L12 dimers bind in a sequential fashion forming a multimeric L10(L12)X complex. Post-translationally, one or more lysine residues are methylated.

Forms part of the ribosomal stalk which helps the ribosome interact with GTP-bound translation factors. The chain is Large ribosomal subunit protein uL11 from Streptococcus gordonii (strain Challis / ATCC 35105 / BCRC 15272 / CH1 / DL1 / V288).